We begin with the raw amino-acid sequence, 208 residues long: V-type ATP synthase subunit E (208 aa).

This sequence belongs to the V-ATPase E subunit family.

Its function is as follows. Produces ATP from ADP in the presence of a proton gradient across the membrane. In Chlamydia felis (strain Fe/C-56) (Chlamydophila felis), this protein is V-type ATP synthase subunit E.